Here is a 120-residue protein sequence, read N- to C-terminus: Glycine cleavage system H protein (120 aa).

In terms of domain architecture, Lipoyl-binding spans 17 to 99; the sequence is IATVGITSHA…QGAGWFFKLK (83 aa). The residue at position 58 (Lys-58) is an N6-lipoyllysine.

It belongs to the GcvH family. In terms of assembly, the glycine cleavage system is composed of four proteins: P, T, L and H. It depends on (R)-lipoate as a cofactor.

Its function is as follows. The glycine cleavage system catalyzes the degradation of glycine. The H protein shuttles the methylamine group of glycine from the P protein to the T protein. The chain is Glycine cleavage system H protein from Agrobacterium fabrum (strain C58 / ATCC 33970) (Agrobacterium tumefaciens (strain C58)).